The primary structure comprises 203 residues: Ras-related protein RABG3b (203 aa).

GTP is bound at residue 15–22 (GDSGVGKT). Positions 37 to 45 (YKATIGADF) match the Effector region motif. GTP-binding positions include 63-67 (DTAGQ), 125-128 (NKVD), and 158-159 (SA). Residues Cys201 and Cys203 are each lipidated (S-geranylgeranyl cysteine). Cys203 is modified (cysteine methyl ester).

This sequence belongs to the small GTPase superfamily. Rab family. Interacts with VPS39. As to expression, expressed in xylem cells of inflorescence stems.

The protein resides in the cell membrane. In terms of biological role, intracellular vesicle trafficking and protein transport. Functions in autophagy. Involved in xylem and tracheary element differentiation. In Arabidopsis thaliana (Mouse-ear cress), this protein is Ras-related protein RABG3b (RABG3B).